A 443-amino-acid chain; its full sequence is D-inositol 3-phosphate glycosyltransferase (443 aa).

1D-myo-inositol 3-phosphate is bound at residue H26. Residues 32-33 and G40 contribute to the UDP-N-acetyl-alpha-D-glucosamine site; that span reads QP. Residues 37–42, K95, Y128, T152, and R172 contribute to the 1D-myo-inositol 3-phosphate site; that span reads DAGGMN. Residues R246, K251, and Q304 each contribute to the UDP-N-acetyl-alpha-D-glucosamine site. The Mg(2+) site is built by Y313, R314, and A316. Positions 326 and 334 each coordinate UDP-N-acetyl-alpha-D-glucosamine. T340 is a Mg(2+) binding site.

Belongs to the glycosyltransferase group 1 family. MshA subfamily. In terms of assembly, homodimer.

It carries out the reaction 1D-myo-inositol 3-phosphate + UDP-N-acetyl-alpha-D-glucosamine = 1D-myo-inositol 2-acetamido-2-deoxy-alpha-D-glucopyranoside 3-phosphate + UDP + H(+). Its function is as follows. Catalyzes the transfer of a N-acetyl-glucosamine moiety to 1D-myo-inositol 3-phosphate to produce 1D-myo-inositol 2-acetamido-2-deoxy-glucopyranoside 3-phosphate in the mycothiol biosynthesis pathway. The chain is D-inositol 3-phosphate glycosyltransferase from Mycobacteroides abscessus (strain ATCC 19977 / DSM 44196 / CCUG 20993 / CIP 104536 / JCM 13569 / NCTC 13031 / TMC 1543 / L948) (Mycobacterium abscessus).